The following is a 193-amino-acid chain: CASP-like protein 2U1 (193 aa).

The Cytoplasmic segment spans residues 1–18; sequence MAMALALGGGQDAERKVK. Residues 19–39 form a helical membrane-spanning segment; sequence VAEVALRALLCGLGALAAALV. The Extracellular portion of the chain corresponds to 40 to 61; the sequence is ATDTQTRTFFSLQKKASYTDMK. Residues 62 to 82 traverse the membrane as a helical segment; sequence AMVFLVDAAAVAAGYSLLQLA. At 83–113 the chain is on the cytoplasmic side; it reads ARCCGGGAMSSGRGDGGGRGRALSWCVFSCD. The chain crosses the membrane as a helical span at residues 114–134; that stretch reads QALAYVLLAAVAAALQASVVA. The Extracellular portion of the chain corresponds to 135-156; sequence KRGQPELQWMGICALYGAFCRQ. The chain crosses the membrane as a helical span at residues 157 to 177; the sequence is AGAGLATAVVAGLAAVLLAFL. The Cytoplasmic segment spans residues 178–193; it reads SAFNLFRLYGSGGTKS.

This sequence belongs to the Casparian strip membrane proteins (CASP) family. In terms of assembly, homodimer and heterodimers.

It is found in the cell membrane. The polypeptide is CASP-like protein 2U1 (Sorghum bicolor (Sorghum)).